Here is a 158-residue protein sequence, read N- to C-terminus: uncharacterized protein (158 aa).

A run of 4 helical transmembrane segments spans residues 12-32 (IITLIIFVAWLFVLILIAVVV), 39-59 (LDILFGWMLPLPFAVLNSLSV), 90-110 (LIYLIPVIISFVVTPSIFNTI), and 113-133 (IISTLFFPILNLVLSFVWLPL).

The protein resides in the cell membrane. This is an uncharacterized protein from Mycoplasma genitalium (strain ATCC 33530 / DSM 19775 / NCTC 10195 / G37) (Mycoplasmoides genitalium).